Consider the following 332-residue polypeptide: MKAVVVKGHKQGYEVREVQDPKPASGEVIIKVRRAALCYRDLLQLQGFYPRMKYPVVLGHEVVGEILEVGEGVTGFSPGDRVISLLYAPDGTCHYCRQGEEAYCHSRLGYSEELDGFFSEMAKVKVTSLVKVPTRASDEGAVMVPCVTGMVYRGLRRANLREGETVLVTGASGGVGIHALQVAKAMGARVVGVTTSEEKASIVGKYADRVIVGSKFSEEAKKEDINVVIDTVGTPTFDESLKSLWMGGRIVQIGNVDPTQSYQLRLGYTILKDIAIIGHASATRRDAEGALKLTAEGKIRPVVAGTVHLEEIDKGYEMLKDKHKVGKVLLTT.

Cys-38 contacts Zn(2+). Tyr-39 is an NADP(+) binding site. 6 residues coordinate Zn(2+): His-60, Asp-90, Cys-93, Cys-96, Cys-104, and Cys-146. NADP(+) contacts are provided by residues 172–175 (SGGV) and 194–196 (TTS).

The protein belongs to the zinc-containing alcohol dehydrogenase family. Monomer. The cofactor is Zn(2+).

It carries out the reaction propanoyl-CoA + NADP(+) = acryloyl-CoA + NADPH + H(+). Plays a role in autotrophic carbon fixation via the 3-hydroxypropionate/4-hydroxybutyrate cycle. Catalyzes the acryloyl-CoA dependent NADPH oxidation and formation of propionyl-CoA. The chain is Acryloyl-coenzyme A reductase from Metallosphaera sedula (strain ATCC 51363 / DSM 5348 / JCM 9185 / NBRC 15509 / TH2).